We begin with the raw amino-acid sequence, 258 residues long: MKDVQNQPDNRNIYLQRVGIRNLQYPVTVMDRNNGYQDTVATINMYVDLPVNFRGTHMSRFVEVLNRYRLGIDPKIIKNMLEELRNNLNASVARVEIEFPYFILKKAPVSSIESFLKYTCRIEGQKTEKLYEFTMSVGVPIMTLCPCSKEISERGAHNQRAMAWIHIKSKKMIWFEELIDAAEQAASSPVFTILKRVDEKFVTEHAYDNPRFVEDVAREIAVRLNRDERISWYRVEVESFESIHDHSAYACVMKDKED.

This sequence belongs to the GTP cyclohydrolase IV family.

The enzyme catalyses GTP + H2O = 7,8-dihydroneopterin 3'-triphosphate + formate + H(+). Its pathway is cofactor biosynthesis; 7,8-dihydroneopterin triphosphate biosynthesis; 7,8-dihydroneopterin triphosphate from GTP: step 1/1. Functionally, converts GTP to 7,8-dihydroneopterin triphosphate. The protein is GTP cyclohydrolase FolE2 of Pseudothermotoga lettingae (strain ATCC BAA-301 / DSM 14385 / NBRC 107922 / TMO) (Thermotoga lettingae).